Consider the following 819-residue polypeptide: NEDD4-binding protein 1 (819 aa).

Residues 1 to 13 (MASGSVQSSSGNG) show a composition bias toward polar residues. Positions 1–20 (MASGSVQSSSGNGRRQAAVV) are disordered. Residues 80-164 (KQAVRRAKEY…VQQFIALFKD (85 aa)) enclose the KH-like domain. Basic and acidic residues predominate over residues 226 to 241 (DDKAECKVNQKDEVSR). Disordered regions lie at residues 226–247 (DDKAECKVNQKDEVSRKGAGTP) and 666–736 (KLDD…MAPR). The 153-residue stretch at 517–669 (LKHIIIDGSN…LGRYGPKLDD (153 aa)) folds into the RNase NYN domain. Residues 673–689 (KQPNNRTVHSSFPSSNE) show a composition bias toward polar residues. The coCUN stretch occupies residues 772–819 (RSPSETMQLKEALLKIFPEADQRHKINEILTAHPFMRDLNALSAMVLD).

It belongs to the N4BP1 family.

Its subcellular location is the cytoplasm. It localises to the cytosol. The protein resides in the nucleus. It is found in the nucleolus. The protein localises to the PML body. Functionally, potent suppressor of cytokine production that acts as a regulator of innate immune signaling and inflammation. Acts as a key negative regulator of select cytokine and chemokine responses elicited by TRIF-independent Toll-like receptors (TLRs), thereby limiting inflammatory cytokine responses to minor insults. Has ribonuclease activity. The chain is NEDD4-binding protein 1 from Xenopus tropicalis (Western clawed frog).